Consider the following 461-residue polypeptide: UDP-glucosyltransferase 1 (461 aa).

The protein belongs to the UDP-glycosyltransferase family.

It functions in the pathway secondary metabolite biosynthesis. In terms of biological role, UDP-glucosyltransferase; part of the pathway that mediates the biosynthesis of tenellin-type 2-pyridones, iron-chelating compounds involved in iron stress tolerance, competition with the natural competitor fungus Metarhizium robertsii and insect hosts infection. Targets the N-OH hydroxyl residue of 15-hydroxytellenin (15-HT) to produce pyridovericin-N-O-(beta-D-glucopyranoside) which is further methylated by the methyltransferase MT1 to yield pyridovericin-N-O-(4-O-methyl-beta-D-glucopyranoside) (PMGP). The pathway begins with the assembly of the polyketide-amino acid backbone by the hybrid PKS-NRPS tenS with the help of the enoyl reductase tenC. These enzymes catalyze the synthesis of the pyrrolidine-2-dione intermediates pretellinin A, 11-hydropretellenin A, 12-hydropretellenin A, 13-hydropretellenin A, 14-hydropretellenin A, 12-oxopretellenin A and prototellinin D. The cytochrome P450 monooxygenase tenA then catalyzes an oxidative ring expansion of pretenellin A and 14-hydropretellenin A to form the 2-pyridone core, leading to pretenellin B and pyridovericin, respectively. The cytochrome P450 monooxygenase tenB is then required for the selective N-hydroxylation of the 2-pyridone nitrogen of yield tellinin and 15-hydroxytellenin (15-HT), respectively. The UDP-glucosyltransferase GT1 and the methyltransferase MT1, located outside the tenS gene cluster, contribute to the stepwise glycosylation and methylation of 15-HT to obtain the glycoside pyridovericin-N-O-(4-O-methyl-beta-D-glucopyranoside) (PMGP). Additional related compounds such as 1-O-methyl-15-HT, (8Z)-1-O-methyl-15-HT, and O-methyltenellin A are also produced but the enzymes involved in their biosynthesis have still to be determined. In Beauveria bassiana (strain ARSEF 2860) (White muscardine disease fungus), this protein is UDP-glucosyltransferase 1.